A 527-amino-acid chain; its full sequence is Amine oxidase [flavin-containing] A (527 aa).

N-acetylmethionine is present on M1. Topologically, residues 1–497 (MESLQKTSDA…PSFWERNLPS (497 aa)) are cytoplasmic. S383 is modified (phosphoserine). C406 is subject to S-8alpha-FAD cysteine. A helical; Anchor for type IV membrane protein transmembrane segment spans residues 498-518 (VSGLLKIVGFSTSITALWFVM). Residues 519-527 (YRFRLLSRS) are Mitochondrial intermembrane-facing. The interaction with membrane phospholipid headgroups stretch occupies residues 520–522 (RFR).

This sequence belongs to the flavin monoamine oxidase family. In terms of assembly, monomer, homo- or heterodimer (containing two subunits of similar size). Each subunit contains a covalently bound flavin. Enzymatically active as monomer. FAD is required as a cofactor.

The protein resides in the mitochondrion outer membrane. It carries out the reaction a secondary aliphatic amine + O2 + H2O = a primary amine + an aldehyde + H2O2. The catalysed reaction is a primary methyl amine + O2 + H2O = an aldehyde + H2O2 + NH4(+). The enzyme catalyses (R)-adrenaline + O2 + H2O = (R)-3,4-dihydroxymandelaldehyde + methylamine + H2O2. It catalyses the reaction dopamine + O2 + H2O = 3,4-dihydroxyphenylacetaldehyde + H2O2 + NH4(+). It carries out the reaction tyramine + O2 + H2O = (4-hydroxyphenyl)acetaldehyde + H2O2 + NH4(+). The catalysed reaction is (R)-noradrenaline + O2 + H2O = (R)-3,4-dihydroxymandelaldehyde + H2O2 + NH4(+). The enzyme catalyses serotonin + O2 + H2O = (5-hydroxyindol-3-yl)acetaldehyde + H2O2 + NH4(+). It catalyses the reaction kynuramine + O2 + H2O = 3-(2-aminophenyl)-3-oxopropanal + H2O2 + NH4(+). It carries out the reaction tryptamine + O2 + H2O = indole-3-acetaldehyde + H2O2 + NH4(+). The catalysed reaction is 2-phenylethylamine + O2 + H2O = 2-phenylacetaldehyde + H2O2 + NH4(+). Its function is as follows. Catalyzes the oxidative deamination of primary and some secondary amine such as neurotransmitters, with concomitant reduction of oxygen to hydrogen peroxide and has important functions in the metabolism of neuroactive and vasoactive amines in the central nervous system and peripheral tissues. Preferentially oxidizes serotonin. Also catalyzes the oxidative deamination of kynuramine to 3-(2-aminophenyl)-3-oxopropanal that can spontaneously condense to 4-hydroxyquinoline. This chain is Amine oxidase [flavin-containing] A, found in Bos taurus (Bovine).